Here is a 58-residue protein sequence, read N- to C-terminus: Apelin receptor early endogenous ligand (58 aa).

Residues 1–22 (MRFFHPLYLLLLLLTVLVLISA) form the signal peptide.

It belongs to the Elabela/Toddler family. As to quaternary structure, interacts with aplnra and aplnrb. Expressed ubiquitously during late blastula and gastrula stages and becomes restricted to the lateral mesoderm, endoderm, and anterior and posterior notochord after gastrulation.

The protein resides in the secreted. Its subcellular location is the extracellular space. Functionally, peptide hormone that functions as endogenous ligand for the G-protein-coupled apelin receptor (aplnra and/or aplnrb), that plays a role in the regulation of normal cardiovascular function and fluid homeostasis. Functions as a balanced agonist activating both G(i) protein pathway and beta-arrestin pathway of APLNR. Downstream G proteins activation, apelin can inhibit cAMP production and activate key intracellular effectors such as ERKs. On the other hand, APLNR activation induces beta-arrestin recruitment to the membrane leading to desensitization and internalization of the receptor. Required for mesendodermal differentiation, blood vessels formation and heart morphogenesis during early development and for adult cardiovascular homeostasis. Acts as a motogen by promoting mesendodermal cell migration during gastrulation by binding and activating the apelin receptor. Acts as an early embryonic regulator of cellular movement with a role in migration and development of cardiac progenitor cells. May act as a chemoattractant for the activation of angioblast migration toward the embryonic midline, i.e. the position of the future vessel formation, during vasculogenesis. Positively regulates sinus venosus (SV)-derived endothelial cells migration into the developing heart to promote coronary blood vessel sprouting. Involved in cardioprotective functions during heart failure. Mediates myocardial contractility in an ERK1/2-dependent manner. The protein is Apelin receptor early endogenous ligand of Danio rerio (Zebrafish).